A 510-amino-acid polypeptide reads, in one-letter code: Protein disulfide-isomerase (510 aa).

The signal sequence occupies residues 1-19 (MLRRALLCLAVAAAPGLYA). Residues 20–136 (DAPEEEDHVL…IVNWLKKRTG (117 aa)) enclose the Thioredoxin 1 domain. Catalysis depends on nucleophile residues Cys55 and Cys58. Residues Cys55 and Cys58 are joined by a disulfide bond. Lys202 is subject to N6-acetyllysine. N6-succinyllysine is present on residues Lys224 and Lys273. Phosphoserine is present on residues Ser333 and Ser359. Residues 351–477 (GKIKPHLMSQ…FKKFLESGGQ (127 aa)) form the Thioredoxin 2 domain. Active-site nucleophile residues include Cys399 and Cys402. Cys399 and Cys402 form a disulfide bridge. Residue Ser429 is modified to Phosphoserine. Positions 473–510 (ESGGQDGAGDDDDLEDLEEAEEPDMEEDDDQKAVKDEL) are disordered. The span at 480–502 (AGDDDDLEDLEEAEEPDMEEDDD) shows a compositional bias: acidic residues. Residues 507–510 (KDEL) carry the Prevents secretion from ER motif.

This sequence belongs to the protein disulfide isomerase family. In terms of assembly, heterodimer; heterodimerizes with the protein microsomal triglyceride transfer MTTP. Homodimer. Homodimer. Monomers and homotetramers may also occur. Interacts with P4HA2, forming a heterotetramer consisting of 2 alpha subunits (P4HA2) and 2 beta (P4HB), where P4HB plays the role of a structural subunit; this tetramer catalyzes the formation of 4-hydroxyproline in collagen. Also constitutes the structural subunit of the microsomal triacylglycerol transfer protein MTTP in mammalian cells. Stabilizes both enzymes and retain them in the ER without contributing to the catalytic activity. Binds UBQLN1. Interacts with ERO1B. Interacts with ILDR2. Interacts with ERN1/IRE1A (via N-terminus); the interaction is enhanced by phosphorylation of P4HB by FAM20C in response to endoplasmic reticulum stress and results in attenuation of ERN1 activity. In terms of processing, phosphorylation of Ser-359 by FAM20C is induced by endoplasmic reticulum stress and results in a functional switch from oxidoreductase to molecular chaperone. It also promotes interaction with ERN1.

It is found in the endoplasmic reticulum. It localises to the endoplasmic reticulum lumen. Its subcellular location is the melanosome. The protein localises to the cell membrane. It catalyses the reaction Catalyzes the rearrangement of -S-S- bonds in proteins.. Its function is as follows. This multifunctional protein catalyzes the formation, breakage and rearrangement of disulfide bonds. At the cell surface, seems to act as a reductase that cleaves disulfide bonds of proteins attached to the cell. May therefore cause structural modifications of exofacial proteins. Inside the cell, seems to form/rearrange disulfide bonds of nascent proteins. At high concentrations and following phosphorylation by FAM20C, functions as a chaperone that inhibits aggregation of misfolded proteins. At low concentrations, facilitates aggregation (anti-chaperone activity). May be involved with other chaperones in the structural modification of the TG precursor in hormone biogenesis. Also acts as a structural subunit of various enzymes such as prolyl 4-hydroxylase and microsomal triacylglycerol transfer protein MTTP. Receptor for LGALS9; the interaction retains P4HB at the cell surface of Th2 T helper cells, increasing disulfide reductase activity at the plasma membrane, altering the plasma membrane redox state and enhancing cell migration. In Macaca fuscata fuscata (Japanese macaque), this protein is Protein disulfide-isomerase (P4HB).